Here is a 634-residue protein sequence, read N- to C-terminus: Chaperone protein DnaK (634 aa).

At threonine 197 the chain carries Phosphothreonine; by autocatalysis. The disordered stretch occupies residues 592-634 (IGSSVYQQPGNQPPAPGGPNANASDDKGPDDDVIDADFTETKD). The segment covering 619–634 (GPDDDVIDADFTETKD) has biased composition (acidic residues).

Belongs to the heat shock protein 70 family.

Functionally, acts as a chaperone. The sequence is that of Chaperone protein DnaK from Prochlorococcus marinus (strain MIT 9515).